Reading from the N-terminus, the 613-residue chain is Phostensin (613 aa).

A compositionally biased stretch (basic and acidic residues) spans 18–33; the sequence is EEASVRGREKAERERL. 2 disordered regions span residues 18–231 and 266–500; these read EEAS…SAYQ and GEER…AVPG. Residues S54, S125, S133, S175, and S195 each carry the phosphoserine modification. Basic and acidic residues-rich tracts occupy residues 104 to 154 and 167 to 191; these read RSEE…ERRL and LEARDWRQSPGEVGDRSSRLSEAWK. T199 carries the post-translational modification Phosphothreonine. The span at 199–221 shows a compositional bias: basic and acidic residues; that stretch reads TPERSLRLAESREQSPRRKEVES. S224 is subject to Phosphoserine. Basic and acidic residues predominate over residues 266-282; that stretch reads GEERQDYSEECGRKEEW. Residues 295–309 show a composition bias toward polar residues; sequence LSETLTREAQGNSSA. Basic and acidic residues-rich tracts occupy residues 314-327, 340-350, and 357-366; these read AEQRPVEDGERGMK, KAREWTPRDIE, and EPPESAEKLL. S368 and S432 each carry phosphoserine. Over residues 424-446 the composition is skewed to pro residues; the sequence is QPPPPAPLSPPPPAPTAPQPPGD. At K457 the chain carries N6-acetyllysine. Residues 476-499 are compositionally biased toward low complexity; the sequence is PRRSVPPATPATPTSPATVDAAVP. S490 and S530 each carry phosphoserine. The disordered stretch occupies residues 552–595; it reads QYPSESSVLEELGPEPEVPSAPNPPAAQPDDEEDEEELLLLQPE. A compositionally biased stretch (pro residues) spans 567–578; the sequence is PEVPSAPNPPAA. A compositionally biased stretch (acidic residues) spans 580 to 589; that stretch reads PDDEEDEEEL.

As to quaternary structure, interacts with Protein phosphatase 1 (PP1). As to expression, isoform 4 is predominantly expressed in leukocytes and spleen.

Its subcellular location is the cytoplasm. The protein resides in the cytoskeleton. Its function is as follows. May target protein phosphatase 1 to F-actin cytoskeleton. This chain is Phostensin (PPP1R18), found in Homo sapiens (Human).